The chain runs to 516 residues: Probable malate:quinone oxidoreductase (516 aa).

The protein belongs to the MQO family. FAD is required as a cofactor.

It catalyses the reaction (S)-malate + a quinone = a quinol + oxaloacetate. It participates in carbohydrate metabolism; tricarboxylic acid cycle; oxaloacetate from (S)-malate (quinone route): step 1/1. This chain is Probable malate:quinone oxidoreductase, found in Mycobacterium sp. (strain MCS).